Here is a 151-residue protein sequence, read N- to C-terminus: MHALQAKILDPRLGSEFPLPAYATPGSAGLDLRALLKEDTLLEPGQTILIPTGLSIYIGDPGLAAVILPRSGLGHKHGIVLGNLVGLIDSDYQGELMVSCWNRGNTPFTIAVGERIAQLVLVPVVQAHFDIVEAFDESQRGAGGFGHSGSH.

Residues 70–72, Asn83, 87–89, and Met97 each bind substrate; these read RSG and LID.

The protein belongs to the dUTPase family. Mg(2+) serves as cofactor.

It catalyses the reaction dUTP + H2O = dUMP + diphosphate + H(+). It participates in pyrimidine metabolism; dUMP biosynthesis; dUMP from dCTP (dUTP route): step 2/2. Functionally, this enzyme is involved in nucleotide metabolism: it produces dUMP, the immediate precursor of thymidine nucleotides and it decreases the intracellular concentration of dUTP so that uracil cannot be incorporated into DNA. The chain is Deoxyuridine 5'-triphosphate nucleotidohydrolase from Pseudomonas putida (strain ATCC 700007 / DSM 6899 / JCM 31910 / BCRC 17059 / LMG 24140 / F1).